The sequence spans 223 residues: Ribonuclease 3 (223 aa).

Residues 3–125 (LERLQKKLGY…IIAAVYLDAG (123 aa)) form the RNase III domain. Glutamate 38 is a Mg(2+) binding site. Aspartate 42 is a catalytic residue. The Mg(2+) site is built by aspartate 111 and glutamate 114. The active site involves glutamate 114. A DRBM domain is found at 152 to 222 (DPKTRLQEYL…ALQVIKVLGI (71 aa)).

This sequence belongs to the ribonuclease III family. In terms of assembly, homodimer. Mg(2+) serves as cofactor.

Its subcellular location is the cytoplasm. It catalyses the reaction Endonucleolytic cleavage to 5'-phosphomonoester.. In terms of biological role, digests double-stranded RNA. Involved in the processing of primary rRNA transcript to yield the immediate precursors to the large and small rRNAs (23S and 16S). Processes some mRNAs, and tRNAs when they are encoded in the rRNA operon. Processes pre-crRNA and tracrRNA of type II CRISPR loci if present in the organism. The sequence is that of Ribonuclease 3 from Glaesserella parasuis serovar 5 (strain SH0165) (Haemophilus parasuis).